Consider the following 347-residue polypeptide: Circulating cathodic antigen (347 aa).

The stretch at 76-109 forms a coiled coil; sequence ICLAAENKQLEQLKIENKTLRNSLDEHQTALDMI. The tract at residues 149-177 is disordered; the sequence is PGPKSVNTPSTNSIDSQSVSQKSNSGKVD. Over residues 153-174 the composition is skewed to polar residues; sequence SVNTPSTNSIDSQSVSQKSNSG. The stretch at 206–233 forms a coiled coil; the sequence is DAYATELEEELHRLRSENAGLREILMIS. The interval 303–332 is disordered; it reads LYNIPNPSDDSSNSGTISGNHSDEDSDEDD. Residues 307–316 show a composition bias toward low complexity; sequence PNPSDDSSNS.

It belongs to the SIKE family. O-glycosylated.

In terms of biological role, involved in protection of the schistosome gut. This is Circulating cathodic antigen from Schistosoma mansoni (Blood fluke).